The primary structure comprises 118 residues: Ribonuclease P protein component (118 aa).

It belongs to the RnpA family. As to quaternary structure, consists of a catalytic RNA component (M1 or rnpB) and a protein subunit.

It carries out the reaction Endonucleolytic cleavage of RNA, removing 5'-extranucleotides from tRNA precursor.. Its function is as follows. RNaseP catalyzes the removal of the 5'-leader sequence from pre-tRNA to produce the mature 5'-terminus. It can also cleave other RNA substrates such as 4.5S RNA. The protein component plays an auxiliary but essential role in vivo by binding to the 5'-leader sequence and broadening the substrate specificity of the ribozyme. This Vibrio cholerae serotype O1 (strain ATCC 39541 / Classical Ogawa 395 / O395) protein is Ribonuclease P protein component.